Reading from the N-terminus, the 263-residue chain is uncharacterized protein (263 aa).

One can recognise a Response regulatory domain in the interval 6–121 (TAIIADDEPL…RLQTTCERVK (116 aa)). A 4-aspartylphosphate modification is found at aspartate 58. Residues 158–263 (IKATQGDDIH…RASQSLFKGM (106 aa)) enclose the HTH LytTR-type domain.

This is an uncharacterized protein from Vibrio parahaemolyticus serotype O3:K6 (strain RIMD 2210633).